The primary structure comprises 143 residues: uncharacterized protein (143 aa).

Positions 24–78 constitute an HTH cro/C1-type domain; that stretch reads IRQRRRWQNMSQAALGEAIGVTFQQVQKYEKGSNRVGAGRLQQISDALEVHPSYF. The H-T-H motif DNA-binding region spans 35 to 54; that stretch reads QAALGEAIGVTFQQVQKYEK.

This is an uncharacterized protein from Sinorhizobium fredii (strain NBRC 101917 / NGR234).